We begin with the raw amino-acid sequence, 357 residues long: Mannonate dehydratase (357 aa).

It belongs to the mannonate dehydratase family. The cofactor is Fe(2+). Mn(2+) is required as a cofactor.

It catalyses the reaction D-mannonate = 2-dehydro-3-deoxy-D-gluconate + H2O. It functions in the pathway carbohydrate metabolism; pentose and glucuronate interconversion. In terms of biological role, catalyzes the dehydration of D-mannonate. This Sorangium cellulosum (strain So ce56) (Polyangium cellulosum (strain So ce56)) protein is Mannonate dehydratase.